The sequence spans 118 residues: Large ribosomal subunit protein uL18 (118 aa).

It belongs to the universal ribosomal protein uL18 family. Part of the 50S ribosomal subunit; part of the 5S rRNA/L5/L18/L25 subcomplex. Contacts the 5S and 23S rRNAs.

In terms of biological role, this is one of the proteins that bind and probably mediate the attachment of the 5S RNA into the large ribosomal subunit, where it forms part of the central protuberance. The sequence is that of Large ribosomal subunit protein uL18 from Rickettsia prowazekii (strain Madrid E).